Consider the following 338-residue polypeptide: Fructose-1,6-bisphosphatase class 1 (338 aa).

The Mg(2+) site is built by Glu94, Asp116, Leu118, and Asp119. Substrate contacts are provided by residues 119-122 (DGSS), Asn210, and Lys276. Glu282 serves as a coordination point for Mg(2+).

Belongs to the FBPase class 1 family. In terms of assembly, homotetramer. Mg(2+) serves as cofactor.

It is found in the cytoplasm. The enzyme catalyses beta-D-fructose 1,6-bisphosphate + H2O = beta-D-fructose 6-phosphate + phosphate. The protein operates within carbohydrate biosynthesis; gluconeogenesis. This is Fructose-1,6-bisphosphatase class 1 from Paraburkholderia phytofirmans (strain DSM 17436 / LMG 22146 / PsJN) (Burkholderia phytofirmans).